Here is a 105-residue protein sequence, read N- to C-terminus: Met repressor (105 aa).

It belongs to the MetJ family. In terms of assembly, homodimer.

Its subcellular location is the cytoplasm. Its function is as follows. This regulatory protein, when combined with SAM (S-adenosylmethionine) represses the expression of the methionine regulon and of enzymes involved in SAM synthesis. This Actinobacillus succinogenes (strain ATCC 55618 / DSM 22257 / CCUG 43843 / 130Z) protein is Met repressor.